The sequence spans 883 residues: Lethal(3)malignant brain tumor-like protein 3 (883 aa).

The interval 1 to 64 is interaction with RBPJ. Required for transcription repressor activity on Notch target genes; it reads MTESASSTSG…VKKATATTTW (64 aa). The span at 146 to 156 shows a compositional bias: basic and acidic residues; that stretch reads HAKDKDQKDER. A disordered region spans residues 146-223; the sequence is HAKDKDQKDE…RGDSAVLKQG (78 aa). 2 stretches are compositionally biased toward acidic residues: residues 157–166 and 185–194; these read DGGEDNDEED and DDGEERDDEM. MBT repeat units follow at residues 232–332, 340–439, and 448–543; these read WCWA…LRPP, FNWQ…LITP, and FSWD…LQAP. A CCHHC-type; degenerate zinc finger spans residues 549 to 593; sequence LMEPSETGGCPTLGCRGVGHFKKSRYLGTQSGANCPYSEINLSKE. The segment at 595 to 768 is disordered; it reads IFPDRLSGDT…TQQQAQTQQQ (174 aa). Residues 616–662 are compositionally biased toward basic and acidic residues; it reads KRMDTRESSSSPETREKHANNFKEDSEKKKENEVKTSAEAKVVREEP. Lys638 is covalently cross-linked (Glycyl lysine isopeptide (Lys-Gly) (interchain with G-Cter in SUMO2)). Composition is skewed to low complexity over residues 663-742 and 749-768; these read TPSV…QQPQ and QPQQVQQAQPTQQQAQTQQQ. Positions 811–875 constitute an SAM domain; it reads WSTDEVSEFI…FNSILMFKAA (65 aa).

In terms of assembly, interacts with RNF2. Interacts (via SAM domain) with SAMD1 (via SAM domain); the interaction mediates L3MBTL3 binding to chromatin. Interacts with RBPJ; the interaction is required for L3MBTL3 localization to chromatin and is impaired the Notch-derived peptides containing the intracellular domain (NICD). Interacts (via SAM domain) with KDM1A. Interacts with DCAF5. Interacts with DNMT1. Interacts with E2F1. Interacts with SOX2. Interacts with SFMBT1. As to expression, detected in hematopoietic progenitor cells in fetal liver. Detected in adult bone marrow, heart, brain, spleen, lung, liver, kidney and testis.

The protein resides in the nucleus. Functionally, is a negative regulator of Notch target genes expression, required for RBPJ-mediated transcriptional repression. It recruits KDM1A to Notch-responsive elements and promotes KDM1A-mediated H3K4me demethylation. Involved in the regulation of ubiquitin-dependent degradation of a set of methylated non-histone proteins, including SOX2. It acts as an adapter recruiting the CRL4-DCAF5 E3 ubiquitin ligase complex to methylated target proteins. Also involved in the regulation of ubiquitin-dependent degradation of methylated DNMT1 and E2F1. Required for normal maturation of myeloid progenitor cells. In Mus musculus (Mouse), this protein is Lethal(3)malignant brain tumor-like protein 3.